We begin with the raw amino-acid sequence, 200 residues long: V-type proton ATPase subunit E (200 aa).

The protein belongs to the V-ATPase E subunit family.

Functionally, produces ATP from ADP in the presence of a proton gradient across the membrane. The polypeptide is V-type proton ATPase subunit E (Thermoanaerobacter pseudethanolicus (strain ATCC 33223 / 39E) (Clostridium thermohydrosulfuricum)).